Reading from the N-terminus, the 555-residue chain is CTP synthase (555 aa).

Residues Met-1 to Ile-271 form an amidoligase domain region. Residue Ser-19 participates in CTP binding. Ser-19 contacts UTP. ATP-binding positions include Ser-20 to Leu-25 and Asp-77. Asp-77 and Glu-145 together coordinate Mg(2+). CTP is bound by residues Asp-152–Glu-154, Lys-192–Gln-197, and Lys-228. Residues Lys-192–Gln-197 and Lys-228 contribute to the UTP site. One can recognise a Glutamine amidotransferase type-1 domain in the interval Arg-297–Ala-537. Gly-358 contributes to the L-glutamine binding site. Catalysis depends on Cys-385, which acts as the Nucleophile; for glutamine hydrolysis. L-glutamine is bound by residues Leu-386–Gln-389, Glu-409, and Arg-466. Active-site residues include His-510 and Glu-512. The disordered stretch occupies residues Arg-535 to Gly-555.

This sequence belongs to the CTP synthase family. As to quaternary structure, homotetramer.

The catalysed reaction is UTP + L-glutamine + ATP + H2O = CTP + L-glutamate + ADP + phosphate + 2 H(+). The enzyme catalyses L-glutamine + H2O = L-glutamate + NH4(+). It catalyses the reaction UTP + NH4(+) + ATP = CTP + ADP + phosphate + 2 H(+). The protein operates within pyrimidine metabolism; CTP biosynthesis via de novo pathway; CTP from UDP: step 2/2. Its activity is regulated as follows. Allosterically activated by GTP, when glutamine is the substrate; GTP has no effect on the reaction when ammonia is the substrate. The allosteric effector GTP functions by stabilizing the protein conformation that binds the tetrahedral intermediate(s) formed during glutamine hydrolysis. Inhibited by the product CTP, via allosteric rather than competitive inhibition. Functionally, catalyzes the ATP-dependent amination of UTP to CTP with either L-glutamine or ammonia as the source of nitrogen. Regulates intracellular CTP levels through interactions with the four ribonucleotide triphosphates. The polypeptide is CTP synthase (Anaeromyxobacter sp. (strain K)).